Consider the following 461-residue polypeptide: Serine--tRNA ligase (461 aa).

The disordered stretch occupies residues 112 to 134 (EVPFGRDENDNREHHTFGEKPRF). Positions 114–134 (PFGRDENDNREHHTFGEKPRF) are enriched in basic and acidic residues. An L-serine-binding site is contributed by 252–254 (TAE). Position 283–285 (283–285 (RAE)) interacts with ATP. Glu306 serves as a coordination point for L-serine. An ATP-binding site is contributed by 370-373 (EISS). Ser406 serves as a coordination point for L-serine.

This sequence belongs to the class-II aminoacyl-tRNA synthetase family. Type-1 seryl-tRNA synthetase subfamily. As to quaternary structure, homodimer. The tRNA molecule binds across the dimer.

The protein localises to the cytoplasm. The enzyme catalyses tRNA(Ser) + L-serine + ATP = L-seryl-tRNA(Ser) + AMP + diphosphate + H(+). It catalyses the reaction tRNA(Sec) + L-serine + ATP = L-seryl-tRNA(Sec) + AMP + diphosphate + H(+). It participates in aminoacyl-tRNA biosynthesis; selenocysteinyl-tRNA(Sec) biosynthesis; L-seryl-tRNA(Sec) from L-serine and tRNA(Sec): step 1/1. In terms of biological role, catalyzes the attachment of serine to tRNA(Ser). Is also able to aminoacylate tRNA(Sec) with serine, to form the misacylated tRNA L-seryl-tRNA(Sec), which will be further converted into selenocysteinyl-tRNA(Sec). This is Serine--tRNA ligase from Methylocella silvestris (strain DSM 15510 / CIP 108128 / LMG 27833 / NCIMB 13906 / BL2).